Consider the following 257-residue polypeptide: Ribonuclease HII (257 aa).

Residues 72 to 257 (TYIAGIDEVG…FAPIKDMIQK (186 aa)) form the RNase H type-2 domain. A divalent metal cation contacts are provided by aspartate 78, glutamate 79, and aspartate 170.

It belongs to the RNase HII family. Requires Mn(2+) as cofactor. Mg(2+) is required as a cofactor.

It localises to the cytoplasm. It catalyses the reaction Endonucleolytic cleavage to 5'-phosphomonoester.. Functionally, endonuclease that specifically degrades the RNA of RNA-DNA hybrids. The sequence is that of Ribonuclease HII from Bacillus cereus (strain B4264).